Reading from the N-terminus, the 689-residue chain is Methionine--tRNA ligase (689 aa).

A 'HIGH' region motif is present at residues 15 to 25 (PYANGPIHLGH). Zn(2+) contacts are provided by Cys-146, Cys-149, Cys-159, and Cys-162. The 'KMSKS' region motif lies at 332-336 (KMSKS). ATP is bound at residue Lys-335. Positions 554–574 (DAPKTAAPEKTAEASSVSSEP) are disordered. The tRNA-binding domain maps to 588 to 689 (DFAKIDLRIA…EGAQPGMRVK (102 aa)).

It belongs to the class-I aminoacyl-tRNA synthetase family. MetG type 1 subfamily. Homodimer. It depends on Zn(2+) as a cofactor.

Its subcellular location is the cytoplasm. It catalyses the reaction tRNA(Met) + L-methionine + ATP = L-methionyl-tRNA(Met) + AMP + diphosphate. Is required not only for elongation of protein synthesis but also for the initiation of all mRNA translation through initiator tRNA(fMet) aminoacylation. In Shewanella baltica (strain OS185), this protein is Methionine--tRNA ligase.